The following is a 124-amino-acid chain: Putative outer membrane protein CT_569 (124 aa).

The N-terminal stretch at 1–31 (MKKTKKRKQSITLVEMMVVITLIGIIGGALA) is a signal peptide.

The protein resides in the cell outer membrane. This is Putative outer membrane protein CT_569 from Chlamydia trachomatis serovar D (strain ATCC VR-885 / DSM 19411 / UW-3/Cx).